The following is a 281-amino-acid chain: Phytanoyl-CoA dioxygenase 1 (281 aa).

2-oxoglutarate contacts are provided by residues lysine 98, methionine 137, 152–154 (HQD), and tryptophan 169. Residues histidine 152 and aspartate 154 each contribute to the Fe cation site. Residue histidine 237 participates in Fe cation binding. Residues serine 239 and arginine 248 each coordinate 2-oxoglutarate.

Belongs to the PhyH family. Requires Fe cation as cofactor. It depends on L-ascorbate as a cofactor.

The catalysed reaction is phytanoyl-CoA + 2-oxoglutarate + O2 = 2-hydroxyphytanoyl-CoA + succinate + CO2. The protein operates within lipid metabolism; fatty acid metabolism. Converts phytanoyl-CoA to 2-hydroxyphytanoyl-CoA. The polypeptide is Phytanoyl-CoA dioxygenase 1 (Oryza sativa subsp. japonica (Rice)).